Here is a 200-residue protein sequence, read N- to C-terminus: Potassium-transporting ATPase KdpC subunit (200 aa).

Residues 9 to 31 traverse the membrane as a helical segment; it reads LVMLVALTALTGLVYPLAMTGVA. The segment at 68-97 is disordered; that stretch reads GRPSATTAPDPQDSSKTVPSPYNAANSMGA. Residues 71–96 are compositionally biased toward polar residues; that stretch reads SATTAPDPQDSSKTVPSPYNAANSMG.

This sequence belongs to the KdpC family. In terms of assembly, the system is composed of three essential subunits: KdpA, KdpB and KdpC.

The protein resides in the cell inner membrane. Functionally, part of the high-affinity ATP-driven potassium transport (or Kdp) system, which catalyzes the hydrolysis of ATP coupled with the electrogenic transport of potassium into the cytoplasm. This subunit acts as a catalytic chaperone that increases the ATP-binding affinity of the ATP-hydrolyzing subunit KdpB by the formation of a transient KdpB/KdpC/ATP ternary complex. The chain is Potassium-transporting ATPase KdpC subunit from Rhodopseudomonas palustris (strain BisA53).